We begin with the raw amino-acid sequence, 83 residues long: Small ribosomal subunit protein bS16 (83 aa).

This sequence belongs to the bacterial ribosomal protein bS16 family.

This is Small ribosomal subunit protein bS16 from Syntrophus aciditrophicus (strain SB).